The primary structure comprises 301 residues: Putative carboxypeptidase slr1534 (301 aa).

The Nucleophile role is filled by Ser116. Residues Glu206 and His276 each act as charge relay system in the active site.

This sequence belongs to the peptidase S66 family.

The polypeptide is Putative carboxypeptidase slr1534 (Synechocystis sp. (strain ATCC 27184 / PCC 6803 / Kazusa)).